Reading from the N-terminus, the 536-residue chain is ATP synthase subunit beta (536 aa).

The tract at residues 1–57 is disordered; that stretch reads MVKAVSSSKGAAKVEQKKSAARSGVKKNASKSQASLQDTSSPLKTSSKNAHAKKDVQ. Polar residues predominate over residues 30–49; sequence SKSQASLQDTSSPLKTSSKN. 208-215 lines the ATP pocket; that stretch reads GGAGVGKT.

The protein belongs to the ATPase alpha/beta chains family. As to quaternary structure, F-type ATPases have 2 components, CF(1) - the catalytic core - and CF(0) - the membrane proton channel. CF(1) has five subunits: alpha(3), beta(3), gamma(1), delta(1), epsilon(1). CF(0) has three main subunits: a(1), b(2) and c(9-12). The alpha and beta chains form an alternating ring which encloses part of the gamma chain. CF(1) is attached to CF(0) by a central stalk formed by the gamma and epsilon chains, while a peripheral stalk is formed by the delta and b chains.

The protein resides in the cell inner membrane. The catalysed reaction is ATP + H2O + 4 H(+)(in) = ADP + phosphate + 5 H(+)(out). In terms of biological role, produces ATP from ADP in the presence of a proton gradient across the membrane. The catalytic sites are hosted primarily by the beta subunits. The polypeptide is ATP synthase subunit beta (Bartonella quintana (strain Toulouse) (Rochalimaea quintana)).